A 435-amino-acid chain; its full sequence is S-locus-specific glycoprotein BS29-2 (435 aa).

A signal peptide spans 1 to 30 (MKGVGKPYENSHTSFLLVFFVLTLFSPAFS). The Bulb-type lectin domain maps to 33–155 (TLSSIESLKI…NKNDRSGFLW (123 aa)). Residues N113, N120, N244, N260, and N389 are each glycosylated (N-linked (GlcNAc...) asparagine). One can recognise a PAN domain in the interval 350 to 430 (CSGDGFTRMK…NGQDLYVRLA (81 aa)). Disulfide bonds link C380–C405 and C388–C390.

Stigma.

Its function is as follows. Involved in sporophytic self-incompatibility system (the inability of flowering plants to achieve self-fertilization). In Brassica oleracea var. alboglabra (Chinese kale), this protein is S-locus-specific glycoprotein BS29-2 (SLSG).